A 213-amino-acid polypeptide reads, in one-letter code: Cytochrome b6 (213 aa).

A helical transmembrane segment spans residues 30-50; it reads IFFCLGGLTLLCFIVQCLTGI. Residue C33 coordinates heme c. Heme b contacts are provided by H84 and H98. 3 helical membrane-spanning segments follow: residues 88-108, 114-134, and 184-204; these read CQLM…TGAF, LNWV…FTGY, and LHVM…FIMI. Heme b is bound by residues H185 and H200.

This sequence belongs to the cytochrome b family. PetB subfamily. The subunits of the cytochrome bc complex are a Rieske Fe-S protein (PetC), cytochrome b6 (PetB), subunit IV (PetD), and a diheme cytochrome c (PetX). It depends on heme b as a cofactor. Heme c is required as a cofactor.

The protein localises to the cell membrane. Functionally, component of the cytochrome bc complex which donates electrons to the photosynthetic reaction center. The sequence is that of Cytochrome b6 from Heliomicrobium gestii (Heliobacterium gestii).